The primary structure comprises 138 residues: PTS system sorbose-specific EIIA component (138 aa).

The PTS EIIA type-4 domain occupies 1–125 (MEIILVGHAH…KIKEEFSTSL (125 aa)). The Tele-phosphohistidine intermediate role is filled by H8. Position 8 is a phosphohistidine; by HPr (H8).

The protein localises to the cytoplasm. Its function is as follows. The phosphoenolpyruvate-dependent sugar phosphotransferase system (PTS), a major carbohydrate active transport system, catalyzes the phosphorylation of incoming sugar substrates concomitant with their translocation across the cell membrane. The enzyme II SorABCD PTS system is involved in L-sorbose transport. This is PTS system sorbose-specific EIIA component from Lacticaseibacillus casei (Lactobacillus casei).